The chain runs to 227 residues: MLLHIPNVLNAEQLRIVRERLDTAGDAWVDGRATAGYQGAPVKRNQQIAEHTPIARELGDVILASIERNPLFISSVLPNQVYPPLFNRYEGGMQFGSHVDGAVRVLPNGVKLRTDVSVTLFISDPADYDGGELVIEDTYGVQQVKLPAGDMIVYPATSLHQVTPVTRGVRVASFFWVQSLVRSDTQRAMLFDMDTAIQRLNATNADDAARRSLVGIYHNLLRTWSEP.

Residues 80–179 (QVYPPLFNRY…RVASFFWVQS (100 aa)) enclose the Fe2OG dioxygenase domain. 3 residues coordinate Fe cation: H98, D100, and H160. R170 provides a ligand contact to 2-oxoglutarate.

Requires Fe(2+) as cofactor. It depends on L-ascorbate as a cofactor.

The polypeptide is PKHD-type hydroxylase Bxeno_B2756 (Paraburkholderia xenovorans (strain LB400)).